We begin with the raw amino-acid sequence, 364 residues long: MANKTVLFNKHLESDAKMVDFHGWDMPLNYGSQIEEHNAVRQDAGMFDVSHMTVVDVTGTDACAFLRKLLANDVAKLKVPGKALYGGMLDHNAGVIDDLITYYLTDTHYRVVVNSATREKDLAWIAEQVKGFDVEIVERPELAMIAVQGPNAKAKAATVFNDAQNAAVEGMKPFFGVQADSLFIATTGYTGETGYEIIVPEDEAQALWQGLLEAGVKPCGLGARDTLRLEAGMNLYGLDMDETVNPLAANMGWTIAWEPQDRDFNGREALAAIKAAGTEKLVGLIMEAKGVIRPGMSVFFTDGEGVEQQGTITSGTFSPTLGYSIAMARVPRSIGDTAEVEMRKKRVSVKVVAPSFVRNGKQAF.

The protein belongs to the GcvT family. In terms of assembly, the glycine cleavage system is composed of four proteins: P, T, L and H.

The catalysed reaction is N(6)-[(R)-S(8)-aminomethyldihydrolipoyl]-L-lysyl-[protein] + (6S)-5,6,7,8-tetrahydrofolate = N(6)-[(R)-dihydrolipoyl]-L-lysyl-[protein] + (6R)-5,10-methylene-5,6,7,8-tetrahydrofolate + NH4(+). Functionally, the glycine cleavage system catalyzes the degradation of glycine. The protein is Aminomethyltransferase of Shewanella sediminis (strain HAW-EB3).